The sequence spans 202 residues: dITP/XTP pyrophosphatase (202 aa).

Threonine 11–lysine 16 is a binding site for substrate. The active-site Proton acceptor is the aspartate 73. Aspartate 73 is a Mg(2+) binding site. Residues serine 74, phenylalanine 155–aspartate 158, lysine 178, and histidine 183–arginine 184 contribute to the substrate site.

This sequence belongs to the HAM1 NTPase family. As to quaternary structure, homodimer. Requires Mg(2+) as cofactor.

The enzyme catalyses XTP + H2O = XMP + diphosphate + H(+). The catalysed reaction is dITP + H2O = dIMP + diphosphate + H(+). It catalyses the reaction ITP + H2O = IMP + diphosphate + H(+). In terms of biological role, pyrophosphatase that catalyzes the hydrolysis of nucleoside triphosphates to their monophosphate derivatives, with a high preference for the non-canonical purine nucleotides XTP (xanthosine triphosphate), dITP (deoxyinosine triphosphate) and ITP. Seems to function as a house-cleaning enzyme that removes non-canonical purine nucleotides from the nucleotide pool, thus preventing their incorporation into DNA/RNA and avoiding chromosomal lesions. This is dITP/XTP pyrophosphatase from Lactiplantibacillus plantarum (strain ATCC BAA-793 / NCIMB 8826 / WCFS1) (Lactobacillus plantarum).